A 419-amino-acid chain; its full sequence is UDP-N-acetylglucosamine 1-carboxyvinyltransferase (419 aa).

22-23 (KN) lines the phosphoenolpyruvate pocket. Residue Arg-93 coordinates UDP-N-acetyl-alpha-D-glucosamine. The active-site Proton donor is the Cys-117. The residue at position 117 (Cys-117) is a 2-(S-cysteinyl)pyruvic acid O-phosphothioketal. UDP-N-acetyl-alpha-D-glucosamine-binding residues include Asp-306 and Ile-328.

This sequence belongs to the EPSP synthase family. MurA subfamily.

The protein resides in the cytoplasm. It carries out the reaction phosphoenolpyruvate + UDP-N-acetyl-alpha-D-glucosamine = UDP-N-acetyl-3-O-(1-carboxyvinyl)-alpha-D-glucosamine + phosphate. It participates in cell wall biogenesis; peptidoglycan biosynthesis. Functionally, cell wall formation. Adds enolpyruvyl to UDP-N-acetylglucosamine. This chain is UDP-N-acetylglucosamine 1-carboxyvinyltransferase, found in Ruthia magnifica subsp. Calyptogena magnifica.